Consider the following 400-residue polypeptide: Tektin-B1 (400 aa).

Coiled-coil stretches lie at residues 35–81 (TRLS…AKAL), 236–294 (FALR…LENR), and 310–353 (GLVN…LELK).

Belongs to the tektin family. As to quaternary structure, may form a heterodimer with tektin a or exist as a homodimer. Cilia and flagella.

It localises to the cytoplasm. Its subcellular location is the cytoskeleton. Functionally, structural component of ciliary and flagellar microtubules. This is Tektin-B1 from Strongylocentrotus purpuratus (Purple sea urchin).